Here is a 383-residue protein sequence, read N- to C-terminus: Chaperone protein DnaJ (383 aa).

The J domain occupies 5–69 (DYYDILGVSK…QKRAQYDQFG (65 aa)). Residues 138 to 222 (GKTTTIKYDR…CHGAGHVHER (85 aa)) form a CR-type zinc finger. Cys-151, Cys-154, Cys-168, Cys-171, Cys-194, Cys-197, Cys-210, and Cys-213 together coordinate Zn(2+). 4 CXXCXGXG motif repeats span residues 151 to 158 (CKTCHGTG), 168 to 175 (CPRCHGAG), 194 to 201 (CPECNGTG), and 210 to 217 (CDTCHGAG).

The protein belongs to the DnaJ family. In terms of assembly, homodimer. Requires Zn(2+) as cofactor.

The protein localises to the cytoplasm. Functionally, participates actively in the response to hyperosmotic and heat shock by preventing the aggregation of stress-denatured proteins and by disaggregating proteins, also in an autonomous, DnaK-independent fashion. Unfolded proteins bind initially to DnaJ; upon interaction with the DnaJ-bound protein, DnaK hydrolyzes its bound ATP, resulting in the formation of a stable complex. GrpE releases ADP from DnaK; ATP binding to DnaK triggers the release of the substrate protein, thus completing the reaction cycle. Several rounds of ATP-dependent interactions between DnaJ, DnaK and GrpE are required for fully efficient folding. Also involved, together with DnaK and GrpE, in the DNA replication of plasmids through activation of initiation proteins. The polypeptide is Chaperone protein DnaJ (Limosilactobacillus reuteri (strain DSM 20016) (Lactobacillus reuteri)).